Consider the following 248-residue polypeptide: 14-3-3 protein zeta (248 aa).

It belongs to the 14-3-3 family. Homodimer; homodimerization is not essential for modulating the activity of Slo. Interacts with phosphorylated Slob; the interaction with Slob mediates an indirect interaction with Slo. Interacts with phosphorylated yki. Interacts with hemo; this represses 14-3-3zeta activity which prevents the 14-3-3zeta-mediated activation of phosphoinositide 3-kinase Pi3K68D. This, in turn, inhibits the Pi3K68D-mediated conversion of phosphatidylinositol to phosphatidylinositol-3-phosphate and prevents progression of early endosomes through the maturation process which regulates subsequent steps of phagocytic processing. Interacts with REPTOR (when phosphorylated), this interaction may assist the cytoplasmic retention of REPTOR. As to expression, predominantly expressed in the ventral nerve cord of the embryo, and in the neural tissues of the head. Also found in the region posterior to the morphogenetic furrow of the eye imaginal disk where cells differentiate as photoreceptors.

Its subcellular location is the cytoplasm. It localises to the early endosome. Required in Raf-dependent cell proliferation and photoreceptor differentiation during eye development. Acts upstream of Raf and downstream of Ras, and is essential for viability. Acts as a negative regulator of the slo calcium channel via its interaction with slo-binding protein slob. Inhibits yki activity by restricting its nuclear localization. Binds to and promotes the activity of phosphoinositide 3-kinase Pi3K68D which converts phosphatidylinositol to phosphatidylinositol-3-phosphate and promotes maturation of early endosomes. The protein is 14-3-3 protein zeta (14-3-3zeta) of Drosophila melanogaster (Fruit fly).